A 437-amino-acid polypeptide reads, in one-letter code: Proline--tRNA ligase (437 aa).

Belongs to the class-II aminoacyl-tRNA synthetase family. ProS type 2 subfamily. As to quaternary structure, homodimer.

Its subcellular location is the cytoplasm. It carries out the reaction tRNA(Pro) + L-proline + ATP = L-prolyl-tRNA(Pro) + AMP + diphosphate. Functionally, catalyzes the attachment of proline to tRNA(Pro) in a two-step reaction: proline is first activated by ATP to form Pro-AMP and then transferred to the acceptor end of tRNA(Pro). The chain is Proline--tRNA ligase from Acidiphilium cryptum (strain JF-5).